Consider the following 379-residue polypeptide: LIM/homeobox protein Lhx9 (379 aa).

2 consecutive LIM zinc-binding domains span residues 51-112 and 113-175; these read TLCA…RFSV and QRCA…LVQG. Disordered regions lie at residues 232 to 257 and 310 to 379; these read ENDT…TSFK and RQEN…TNLF. A compositionally biased stretch (basic residues) spans 248-257; the sequence is KTKRMRTSFK. Positions 249–308 form a DNA-binding region, homeobox; the sequence is TKRMRTSFKHHQLRTTKSYFAINHNPDAKDLKQLAQKTGLTKRVLQVWFQNARAKFRRNL. Polar residues predominate over residues 326–379; it reads APASTDSAALTPTGAASTLSDLTSPSLNVGASVTPNMDSHESGSPSQTTLTNLF.

As to expression, isoform 1 and isoform 3 are expressed in ovary, testis, brain and heart. Isoform 4 and isoform 5 are expressed in brain.

Its subcellular location is the nucleus. In terms of biological role, may be involved in gonadal development. The polypeptide is LIM/homeobox protein Lhx9 (lhx9) (Glandirana rugosa (Japanese wrinkled frog)).